The chain runs to 465 residues: 3-isopropylmalate dehydratase large subunit (465 aa).

Cys347, Cys407, and Cys410 together coordinate [4Fe-4S] cluster. A disordered region spans residues 416 to 443; it reads DTLRPGERSASTSNRNFEGRQGPGGRTH.

The protein belongs to the aconitase/IPM isomerase family. LeuC type 1 subfamily. Heterodimer of LeuC and LeuD. [4Fe-4S] cluster serves as cofactor.

It carries out the reaction (2R,3S)-3-isopropylmalate = (2S)-2-isopropylmalate. It functions in the pathway amino-acid biosynthesis; L-leucine biosynthesis; L-leucine from 3-methyl-2-oxobutanoate: step 2/4. Functionally, catalyzes the isomerization between 2-isopropylmalate and 3-isopropylmalate, via the formation of 2-isopropylmaleate. The chain is 3-isopropylmalate dehydratase large subunit from Frankia casuarinae (strain DSM 45818 / CECT 9043 / HFP020203 / CcI3).